The following is a 288-amino-acid chain: Bifunctional protein FolD (288 aa).

Residues 166-168 (GAS) and Ile-232 each bind NADP(+).

The protein belongs to the tetrahydrofolate dehydrogenase/cyclohydrolase family. Homodimer.

It carries out the reaction (6R)-5,10-methylene-5,6,7,8-tetrahydrofolate + NADP(+) = (6R)-5,10-methenyltetrahydrofolate + NADPH. The enzyme catalyses (6R)-5,10-methenyltetrahydrofolate + H2O = (6R)-10-formyltetrahydrofolate + H(+). It functions in the pathway one-carbon metabolism; tetrahydrofolate interconversion. Its function is as follows. Catalyzes the oxidation of 5,10-methylenetetrahydrofolate to 5,10-methenyltetrahydrofolate and then the hydrolysis of 5,10-methenyltetrahydrofolate to 10-formyltetrahydrofolate. The protein is Bifunctional protein FolD of Escherichia coli O139:H28 (strain E24377A / ETEC).